A 315-amino-acid chain; its full sequence is Methionyl-tRNA formyltransferase (315 aa).

Position 111-114 (111-114 (SLLP)) interacts with (6S)-5,6,7,8-tetrahydrofolate.

It belongs to the Fmt family.

The enzyme catalyses L-methionyl-tRNA(fMet) + (6R)-10-formyltetrahydrofolate = N-formyl-L-methionyl-tRNA(fMet) + (6S)-5,6,7,8-tetrahydrofolate + H(+). Attaches a formyl group to the free amino group of methionyl-tRNA(fMet). The formyl group appears to play a dual role in the initiator identity of N-formylmethionyl-tRNA by promoting its recognition by IF2 and preventing the misappropriation of this tRNA by the elongation apparatus. This Flavobacterium johnsoniae (strain ATCC 17061 / DSM 2064 / JCM 8514 / BCRC 14874 / CCUG 350202 / NBRC 14942 / NCIMB 11054 / UW101) (Cytophaga johnsonae) protein is Methionyl-tRNA formyltransferase.